We begin with the raw amino-acid sequence, 782 residues long: U-box domain-containing protein 7 (782 aa).

Residues valine 271–glutamine 345 form the U-box domain. 5 ARM repeats span residues glutamate 456–valine 499, asparagine 502–aspartate 541, glutamate 542–threonine 581, serine 583–serine 623, and glutamate 626–asparagine 665. Positions glutamate 707–arginine 729 are enriched in basic and acidic residues. The disordered stretch occupies residues glutamate 707–serine 765. Residues histidine 739–valine 748 are compositionally biased toward polar residues.

The catalysed reaction is S-ubiquitinyl-[E2 ubiquitin-conjugating enzyme]-L-cysteine + [acceptor protein]-L-lysine = [E2 ubiquitin-conjugating enzyme]-L-cysteine + N(6)-ubiquitinyl-[acceptor protein]-L-lysine.. It functions in the pathway protein modification; protein ubiquitination. Its function is as follows. Functions as an E3 ubiquitin ligase. The chain is U-box domain-containing protein 7 (PUB7) from Arabidopsis thaliana (Mouse-ear cress).